We begin with the raw amino-acid sequence, 88 residues long: Class II hydrophobin 5 (88 aa).

Positions 1 to 14 are cleaved as a signal peptide; it reads MQFLVLALASLAAA. Disulfide bonds link Cys27/Cys73, Cys35/Cys64, Cys36/Cys48, and Cys74/Cys85.

This sequence belongs to the cerato-ulmin hydrophobin family. As to quaternary structure, homotetramer. Further self-assembles to form highly ordered films at water-air interfaces through intermolecular interactions. As to expression, only appears on young aerial hyphae. HCf-5 is the most abundant transcript in sporulating mycelium.

The protein localises to the secreted. The protein resides in the cell wall. Its function is as follows. Aerial growth, conidiation, and dispersal of filamentous fungi in the environment rely upon a capability of their secreting small amphipathic proteins called hydrophobins (HPBs) with low sequence identity. Class I can self-assemble into an outermost layer of rodlet bundles on aerial cell surfaces, conferring cellular hydrophobicity that supports fungal growth, development and dispersal; whereas Class II form highly ordered films at water-air interfaces through intermolecular interactions but contribute nothing to the rodlet structure. The chain is Class II hydrophobin 5 from Passalora fulva (Tomato leaf mold).